Consider the following 122-residue polypeptide: Large ribosomal subunit protein bL12 (122 aa).

This sequence belongs to the bacterial ribosomal protein bL12 family. As to quaternary structure, homodimer. Part of the ribosomal stalk of the 50S ribosomal subunit. Forms a multimeric L10(L12)X complex, where L10 forms an elongated spine to which 2 to 4 L12 dimers bind in a sequential fashion. Binds GTP-bound translation factors.

Functionally, forms part of the ribosomal stalk which helps the ribosome interact with GTP-bound translation factors. Is thus essential for accurate translation. The polypeptide is Large ribosomal subunit protein bL12 (Staphylococcus haemolyticus (strain JCSC1435)).